Consider the following 858-residue polypeptide: Low-density lipoprotein receptor-related protein 12 (858 aa).

Residues 1 to 32 (MARRWSTKESQRRGSAWLLLFLAGVYGNGALA) form the signal peptide. Over 33–492 (ELSENVHISG…ENCPVIVPTR (460 aa)) the chain is Extracellular. 9 disulfide bridges follow: Cys47–Cys76, Cys103–Cys122, Cys166–Cys178, Cys173–Cys191, Cys185–Cys200, Cys215–Cys232, Cys222–Cys245, Cys239–Cys254, and Cys259–Cys285. Residues 47–159 (CGESPEQIRA…KGFRLAYFSG (113 aa)) form the CUB 1 domain. An N-linked (GlcNAc...) asparagine glycan is attached at Asn75. LDL-receptor class A domains lie at 165 to 201 (DCAC…EVCA) and 214 to 255 (PCAY…IDCD). One can recognise a CUB 2 domain in the interval 259-372 (CGQWLKYFYG…RGFNATYQVD (114 aa)). N-linked (GlcNAc...) asparagine glycans are attached at residues Asn284 and Asn366. LDL-receptor class A domains lie at 374–411 (FCLP…INCT), 412–449 (MCQK…KNCF), and 450–486 (FCQP…ENCP). 9 disulfide bridges follow: Cys375-Cys388, Cys382-Cys401, Cys395-Cys410, Cys413-Cys426, Cys420-Cys439, Cys433-Cys448, Cys451-Cys463, Cys458-Cys476, and Cys470-Cys485. Asn409 is a glycosylation site (N-linked (GlcNAc...) asparagine). A glycan (N-linked (GlcNAc...) asparagine) is linked at Asn441. A helical membrane pass occupies residues 493–513 (VITAAVIGSLICGLLLVIALG). The Cytoplasmic portion of the chain corresponds to 514 to 858 (CTCKLYSLRM…TSDDEALLLC (345 aa)). 2 disordered regions span residues 619–721 (ALVS…VSPA) and 746–767 (SSST…SGRE). Positions 712 to 721 (SVEAPSVSPA) are enriched in low complexity. Over residues 746–755 (SSSTTQNRSP) the composition is skewed to polar residues.

Belongs to the LDLR family. As to quaternary structure, may interact with RACK1, ZFYVE9 and NMRK2.

Its subcellular location is the membrane. The protein resides in the coated pit. In terms of biological role, probable receptor, which may be involved in the internalization of lipophilic molecules and/or signal transduction. May act as a tumor suppressor. This is Low-density lipoprotein receptor-related protein 12 (Lrp12) from Mus musculus (Mouse).